The chain runs to 975 residues: Probable dipeptidyl-aminopeptidase B (975 aa).

Over residues Met1–Leu20 the composition is skewed to basic and acidic residues. The interval Met1–Lys111 is disordered. The Cytoplasmic portion of the chain corresponds to Met1–Arg125. Positions Ser22–Leu31 are enriched in low complexity. Residues Leu68–Leu84 are compositionally biased toward acidic residues. A helical; Signal-anchor for type II membrane protein transmembrane segment spans residues Val126–Ile146. Residues Ser147 to Arg975 lie on the Vacuolar side of the membrane. 3 N-linked (GlcNAc...) asparagine glycosylation sites follow: Asn207, Asn397, and Asn622. Ser826 functions as the Charge relay system in the catalytic mechanism. Asn885 is a glycosylation site (N-linked (GlcNAc...) asparagine). Residues Asp903 and His936 each act as charge relay system in the active site.

The protein belongs to the peptidase S9B family.

It localises to the vacuole membrane. It carries out the reaction Release of an N-terminal dipeptide, Xaa-Yaa-|-Zaa-, from a polypeptide, preferentially when Yaa is Pro, provided Zaa is neither Pro nor hydroxyproline.. In terms of biological role, type IV dipeptidyl-peptidase which removes N-terminal dipeptides sequentially from polypeptides having unsubstituted N-termini provided that the penultimate residue is proline. This chain is Probable dipeptidyl-aminopeptidase B (DAPB), found in Grosmannia clavigera (strain kw1407 / UAMH 11150) (Blue stain fungus).